Here is a 413-residue protein sequence, read N- to C-terminus: MIEELGLKVKTASKEAAKLSTAEKNTFLQKLADSLVENTDRIISENAKDLAKAKGHGISEIMVDRLRLTAQRISDMATGLRQVAELPDPIGQVLQGFTNLDGLKIVQKRVPLGTVGMIFESRPNVTIDAFSLCFKTGNSVLLRGGSDAIYSNMVLVEIIKENLLSAKITDGVVELLSDTSHAEAEKMMQADKFLDVLIPRGSARLINRVKEKATVPVIETGVGNCTIFVDESADLDMATRIVINAKTQRPSVCNAAESLVVHAKIADEFLPKLQNEINKVHEVEFRADERSLKALSAGIPATDEDFGMEFLYYILSVKTVDNLDEAIEHINTYSSRHSESIVTHDYFNAQKFQDEIDAAAVYVNASTRFTDGFVFGLGAEIGISTQKLHARGPMGLEALTSTKYLIDGCGQIR.

It belongs to the gamma-glutamyl phosphate reductase family.

It localises to the cytoplasm. It carries out the reaction L-glutamate 5-semialdehyde + phosphate + NADP(+) = L-glutamyl 5-phosphate + NADPH + H(+). It functions in the pathway amino-acid biosynthesis; L-proline biosynthesis; L-glutamate 5-semialdehyde from L-glutamate: step 2/2. Its function is as follows. Catalyzes the NADPH-dependent reduction of L-glutamate 5-phosphate into L-glutamate 5-semialdehyde and phosphate. The product spontaneously undergoes cyclization to form 1-pyrroline-5-carboxylate. This Lactococcus lactis subsp. cremoris (strain SK11) protein is Gamma-glutamyl phosphate reductase.